Reading from the N-terminus, the 516-residue chain is MYTLKEGIDFYIEPMQSKKVTVFDTTLRDGEQTPGVSLTSTQKLEIAHQLDKLGVDIIEAGFPISSEGDKESVKSISNAGLDTTVCGLARVLKKDIDACFESDVGLVHTFVPTSDVQRIYTIKKSREEVIQLAVEAVQYIKDHGLKCMFSAMDATRTDPEYLIEVFKAVQEAGCDIINVPDTVGVMVPSAMYRQIKGIAAEITIPIDVHCHNDFGLAVANSLMAVEAGASQVQVTINGIGERAGNADLSQTVMSLTSIYGAKTNIRTEYLVETSKMVENYTGIRLPPNTPVVGQNAFSHESGIHSQGVLEKSDTFEPGIMTPEMVGHRRRIVLGKHTGKHAVKQSLESAGIKTNDNQLDEIVIRIKEIANKGKQITDADLYAVASAVLGKASSEEELIKLKEVSVMTGNILTPTAVVKADIEGKEIIAARTGVGPVDAALHAVRDILGESNHFRLQDFRIDAITGGADALADVYIGLENEKGRIVTARSANPDIVMASVEALVNAMNLLYKKENKS.

The 252-residue stretch at 20 to 271 (VTVFDTTLRD…KTNIRTEYLV (252 aa)) folds into the Pyruvate carboxyltransferase domain.

It belongs to the alpha-IPM synthase/homocitrate synthase family.

It carries out the reaction 3-methyl-2-oxobutanoate + acetyl-CoA + H2O = (2S)-2-isopropylmalate + CoA + H(+). The protein operates within amino-acid biosynthesis; L-leucine biosynthesis; L-leucine from 3-methyl-2-oxobutanoate: step 1/4. In terms of biological role, catalyzes the condensation of the acetyl group of acetyl-CoA with 3-methyl-2-oxobutanoate (2-oxoisovalerate) to form 3-carboxy-3-hydroxy-4-methylpentanoate (2-isopropylmalate). This is Probable 2-isopropylmalate synthase (leuA) from Methanosarcina mazei (strain ATCC BAA-159 / DSM 3647 / Goe1 / Go1 / JCM 11833 / OCM 88) (Methanosarcina frisia).